Consider the following 500-residue polypeptide: Metacaspase-5 (500 aa).

A signal peptide spans Met-1 to Pro-18. The tract at residues Tyr-19–Lys-63 is important for catalytic activity. N-linked (GlcNAc...) asparagine glycosylation is found at Asn-70 and Asn-113. His-147 is an active-site residue. Ca(2+) contacts are provided by Asp-162, Asp-178, and Asp-179. Cys-202 is a catalytic residue. Asp-209 lines the Ca(2+) pocket. Residues Asn-219, Asn-235, Asn-258, Asn-264, Asn-283, and Asn-332 are each glycosylated (N-linked (GlcNAc...) asparagine). Disordered regions lie at residues Glu-358–Tyr-419 and Gln-444–Lys-500. Residues Ala-379–Gly-389 show a composition bias toward polar residues. The segment covering Gln-444–Pro-461 has biased composition (low complexity).

The protein belongs to the peptidase C14B family.

The protein localises to the recycling endosome. Functionally, cysteine protease that cleaves specifically after arginine or lysine residues. The chain is Metacaspase-5 from Trypanosoma brucei brucei.